The primary structure comprises 296 residues: Formamidopyrimidine-DNA glycosylase (296 aa).

Pro-2 (schiff-base intermediate with DNA) is an active-site residue. Residue Glu-3 is the Proton donor of the active site. The active-site Proton donor; for beta-elimination activity is the Lys-61. Residues His-104, Arg-128, and Lys-174 each contribute to the DNA site. An FPG-type zinc finger spans residues 260 to 294 (HAYGQQGQACDRCGSNIIREKFANRSSHFCPRCQL). Arg-284 (proton donor; for delta-elimination activity) is an active-site residue.

The protein belongs to the FPG family. As to quaternary structure, monomer. Zn(2+) is required as a cofactor.

It carries out the reaction Hydrolysis of DNA containing ring-opened 7-methylguanine residues, releasing 2,6-diamino-4-hydroxy-5-(N-methyl)formamidopyrimidine.. The catalysed reaction is 2'-deoxyribonucleotide-(2'-deoxyribose 5'-phosphate)-2'-deoxyribonucleotide-DNA = a 3'-end 2'-deoxyribonucleotide-(2,3-dehydro-2,3-deoxyribose 5'-phosphate)-DNA + a 5'-end 5'-phospho-2'-deoxyribonucleoside-DNA + H(+). Functionally, involved in base excision repair of DNA damaged by oxidation or by mutagenic agents. Acts as a DNA glycosylase that recognizes and removes damaged bases. Has a preference for oxidized purines, such as 7,8-dihydro-8-oxoguanine (8-oxoG). Has AP (apurinic/apyrimidinic) lyase activity and introduces nicks in the DNA strand. Cleaves the DNA backbone by beta-delta elimination to generate a single-strand break at the site of the removed base with both 3'- and 5'-phosphates. This Corynebacterium diphtheriae (strain ATCC 700971 / NCTC 13129 / Biotype gravis) protein is Formamidopyrimidine-DNA glycosylase.